An 83-amino-acid chain; its full sequence is Small ribosomal subunit protein bS16 (83 aa).

The protein belongs to the bacterial ribosomal protein bS16 family.

This is Small ribosomal subunit protein bS16 from Shewanella putrefaciens (strain CN-32 / ATCC BAA-453).